The chain runs to 271 residues: Phosphatidylglycerol--prolipoprotein diacylglyceryl transferase (271 aa).

The next 7 helical transmembrane spans lie at 25-45 (WYGI…KFFV), 60-80 (YFIW…ILIY), 103-123 (FVGI…IATL), 134-154 (WIFL…GRIG), 181-201 (PSQL…VYLA), 209-229 (GELI…CEFY), and 235-255 (GIGF…IMFI). A 1,2-diacyl-sn-glycero-3-phospho-(1'-sn-glycerol) is bound at residue arginine 152.

It belongs to the Lgt family.

It localises to the cell inner membrane. The catalysed reaction is L-cysteinyl-[prolipoprotein] + a 1,2-diacyl-sn-glycero-3-phospho-(1'-sn-glycerol) = an S-1,2-diacyl-sn-glyceryl-L-cysteinyl-[prolipoprotein] + sn-glycerol 1-phosphate + H(+). Its pathway is protein modification; lipoprotein biosynthesis (diacylglyceryl transfer). In terms of biological role, catalyzes the transfer of the diacylglyceryl group from phosphatidylglycerol to the sulfhydryl group of the N-terminal cysteine of a prolipoprotein, the first step in the formation of mature lipoproteins. In Campylobacter jejuni subsp. jejuni serotype O:23/36 (strain 81-176), this protein is Phosphatidylglycerol--prolipoprotein diacylglyceryl transferase.